The sequence spans 588 residues: Aspartate--tRNA ligase (588 aa).

Glutamate 174 is a binding site for L-aspartate. The segment at 198-201 is aspartate; sequence QLFK. Arginine 220 is an L-aspartate binding site. ATP-binding positions include 220–222 and glutamine 229; that span reads RDE. An L-aspartate-binding site is contributed by histidine 448. Residue glutamate 482 participates in ATP binding. Residue arginine 489 coordinates L-aspartate. ATP is bound at residue 534–537; that stretch reads GLDR.

This sequence belongs to the class-II aminoacyl-tRNA synthetase family. Type 1 subfamily. As to quaternary structure, homodimer.

It is found in the cytoplasm. The enzyme catalyses tRNA(Asp) + L-aspartate + ATP = L-aspartyl-tRNA(Asp) + AMP + diphosphate. Catalyzes the attachment of L-aspartate to tRNA(Asp) in a two-step reaction: L-aspartate is first activated by ATP to form Asp-AMP and then transferred to the acceptor end of tRNA(Asp). The polypeptide is Aspartate--tRNA ligase (Exiguobacterium sibiricum (strain DSM 17290 / CCUG 55495 / CIP 109462 / JCM 13490 / 255-15)).